The chain runs to 117 residues: NADH-ubiquinone oxidoreductase chain 3 (117 aa).

A run of 3 helical transmembrane segments spans residues 4–24 (IILI…LASI), 60–80 (ITII…MIII), and 86–106 (IMIW…GLYH).

This sequence belongs to the complex I subunit 3 family.

It localises to the mitochondrion membrane. The catalysed reaction is a ubiquinone + NADH + 5 H(+)(in) = a ubiquinol + NAD(+) + 4 H(+)(out). In terms of biological role, core subunit of the mitochondrial membrane respiratory chain NADH dehydrogenase (Complex I) that is believed to belong to the minimal assembly required for catalysis. Complex I functions in the transfer of electrons from NADH to the respiratory chain. The immediate electron acceptor for the enzyme is believed to be ubiquinone. The chain is NADH-ubiquinone oxidoreductase chain 3 (mt:ND3) from Drosophila subobscura (Fruit fly).